We begin with the raw amino-acid sequence, 307 residues long: Ribosomal RNA small subunit methyltransferase H (307 aa).

S-adenosyl-L-methionine-binding positions include 32 to 34, aspartate 52, phenylalanine 78, aspartate 99, and glutamine 106; that span reads GGH.

It belongs to the methyltransferase superfamily. RsmH family.

Its subcellular location is the cytoplasm. It carries out the reaction cytidine(1402) in 16S rRNA + S-adenosyl-L-methionine = N(4)-methylcytidine(1402) in 16S rRNA + S-adenosyl-L-homocysteine + H(+). Functionally, specifically methylates the N4 position of cytidine in position 1402 (C1402) of 16S rRNA. The chain is Ribosomal RNA small subunit methyltransferase H from Acinetobacter baumannii (strain AB307-0294).